The following is a 284-amino-acid chain: Tropomyosin (284 aa).

The stretch at Met1–Tyr284 forms a coiled coil. Polar residues predominate over residues Asn202–Glu213. Residues Asn202 to Glu223 form a disordered region. Basic and acidic residues predominate over residues Ala214–Glu223.

The protein belongs to the tropomyosin family. As to quaternary structure, homodimer.

In terms of biological role, tropomyosin, in association with the troponin complex, plays a central role in the calcium dependent regulation of muscle contraction. The sequence is that of Tropomyosin from Haliotis rufescens (California red abalone).